The following is a 509-amino-acid chain: MVATLANLNFPYLILSACLSAILLSRFLPFTRRDRRPTAKGCLPEPRVFQWDVFFGLDIPISQGRALQQNRYLEWLRDLHASMPRTKTFSVNFGGYRWIYSIEPEILKAVYATNFQDFGVEPIRQHPPGFKPFAEKGVSTSDGEDWAFSRSLIKPFFERSVYVSTDRVKPFADKFLTFIPEDGETFDIQPLLQRWFLDMTSEFIFGKSQDSMTHPERAEVIWAMADVLRGTRLRAQTYKILWAFNWDWWFKAIEKVHGFLNPYIRSTLAELAERQQRVKEGLPVGEERTDLLWSMATMLPEEEALRSQVCIIFVPNNDTTSIFIAHCLYFLARHPDAWRKLREEVTAVGDAPITFELLRNMKYLNGIMNETHRLIPNNVTQIRSALSDVVLPLGGGPDGKAPLDVRKGDIVSVTKTVMYRDPDRWGADADEYRPERWDGMRGGWHFLPYGGGPRRCPAQMMVQNESGYMLCRLARRYARIEARDKEPYRARMRIGPSSLHGVKIAFYKE.

The chain crosses the membrane as a helical span at residues 5–27; sequence LANLNFPYLILSACLSAILLSRF. 3 N-linked (GlcNAc...) asparagine glycosylation sites follow: asparagine 317, asparagine 369, and asparagine 378. Cysteine 456 is a binding site for heme. Residue asparagine 464 is glycosylated (N-linked (GlcNAc...) asparagine).

The protein belongs to the cytochrome P450 family. The cofactor is heme.

The protein localises to the membrane. Its pathway is secondary metabolite biosynthesis. In terms of biological role, cytochrome P450 monooxygenase; part of the gene cluster that mediates the biosynthesis of fumosorinone, a 2-pyridone alkaloid that acts as an inhibitor of protein tyrosine phosphatase 1B which is implicated asa negative regulator of insulin receptor signaling and a potential drug target for the treatment of type II diabetes and other associated metabolic syndromes. The polyketide-amino acid backbone of fumosorinone is first assembled by the PKS-NRPS hybrid fumoS. The PKS modules condense one acetyl-CoA starter unit with 7 malonyl-CoA units, programmed C-methylations occurring after the first 3 and the sixth extensions, and cycles of full reduction occurring after the first 2 extensions. Because fumoS lacks a designated enoyl reductase (ER) domain, the required activity is provided the enoyl reductase fumoC. Upon formation of the polyketide backbone on the thiotemplate, the polyketide is transferred to the NRPS module and linked to tyrosine to produce the acyltetramic acid intermediate called prefumosorinone A. The cytochrome P450 monooxygenase fumoA then probably catalyzes an unprecedented oxidative ring expansion of prefumosorinone A to form prefumosorinone B which contains the 2-pyridone core of fumosorinone. The cytochrome P450 monooxygenase fumoB might hydroxylate the nitrogen of prefumosorinone B, but not the acyltetramic acid prefumosorinone A, to form fumosorinone. The protein is Cytochrome P450 monooxygenase fumoA of Cordyceps fumosorosea (strain ARSEF 2679) (Isaria fumosorosea).